Here is a 320-residue protein sequence, read N- to C-terminus: Lipoyl synthase (320 aa).

[4Fe-4S] cluster is bound by residues cysteine 56, cysteine 61, cysteine 67, cysteine 82, cysteine 86, cysteine 89, and serine 295. One can recognise a Radical SAM core domain in the interval 68–284; sequence WNRRTATFMI…REEALKRGFA (217 aa). The segment at 300–320 is disordered; that stretch reads EQSAQAVARRTGAGRAAQTGD. Over residues 303-320 the composition is skewed to low complexity; it reads AQAVARRTGAGRAAQTGD.

This sequence belongs to the radical SAM superfamily. Lipoyl synthase family. [4Fe-4S] cluster is required as a cofactor.

The protein localises to the cytoplasm. The enzyme catalyses [[Fe-S] cluster scaffold protein carrying a second [4Fe-4S](2+) cluster] + N(6)-octanoyl-L-lysyl-[protein] + 2 oxidized [2Fe-2S]-[ferredoxin] + 2 S-adenosyl-L-methionine + 4 H(+) = [[Fe-S] cluster scaffold protein] + N(6)-[(R)-dihydrolipoyl]-L-lysyl-[protein] + 4 Fe(3+) + 2 hydrogen sulfide + 2 5'-deoxyadenosine + 2 L-methionine + 2 reduced [2Fe-2S]-[ferredoxin]. Its pathway is protein modification; protein lipoylation via endogenous pathway; protein N(6)-(lipoyl)lysine from octanoyl-[acyl-carrier-protein]: step 2/2. Its function is as follows. Catalyzes the radical-mediated insertion of two sulfur atoms into the C-6 and C-8 positions of the octanoyl moiety bound to the lipoyl domains of lipoate-dependent enzymes, thereby converting the octanoylated domains into lipoylated derivatives. This Symbiobacterium thermophilum (strain DSM 24528 / JCM 14929 / IAM 14863 / T) protein is Lipoyl synthase.